Consider the following 113-residue polypeptide: Ribulose bisphosphate carboxylase small subunit (113 aa).

The protein belongs to the RuBisCO small chain family. In terms of assembly, heterohexadecamer of 8 large and 8 small subunits. Forms a CsoS2-CsoS1-RuBisCO complex.

It is found in the carboxysome. Its function is as follows. RuBisCO catalyzes two reactions: the carboxylation of D-ribulose 1,5-bisphosphate, the primary event in carbon dioxide fixation, as well as the oxidative fragmentation of the pentose substrate in the photorespiration process. Both reactions occur simultaneously and in competition at the same active site. Although the small subunit is not catalytic it is essential for maximal activity. There are estimated to be 152 RuBisCO holoenzymes per carboxysome. This Prochlorococcus marinus subsp. pastoris (strain CCMP1986 / NIES-2087 / MED4) protein is Ribulose bisphosphate carboxylase small subunit.